A 129-amino-acid polypeptide reads, in one-letter code: MAKTPVRARKRVKKQIVDGVAHIHASFNNTIVTITDRQGNALAWATAGGSGFRGSRKSTPFAAQVAAERCAEMVKEFGLKNLEVMVKGPGPGRESTIRALNAAGFRITNITDVTPIPHNGCRPPKKRRV.

It belongs to the universal ribosomal protein uS11 family. In terms of assembly, part of the 30S ribosomal subunit. Interacts with proteins S7 and S18. Binds to IF-3.

Functionally, located on the platform of the 30S subunit, it bridges several disparate RNA helices of the 16S rRNA. Forms part of the Shine-Dalgarno cleft in the 70S ribosome. The polypeptide is Small ribosomal subunit protein uS11 (Glaesserella parasuis serovar 5 (strain SH0165) (Haemophilus parasuis)).